A 394-amino-acid chain; its full sequence is Phosphoglycerate kinase (394 aa).

Substrate contacts are provided by residues 21–23, Arg-37, 60–63, Arg-119, and Arg-152; these read DFN and HLGR. ATP contacts are provided by residues Lys-202, Glu-324, and 350–353; that span reads GGDS.

The protein belongs to the phosphoglycerate kinase family. As to quaternary structure, monomer.

The protein resides in the cytoplasm. The enzyme catalyses (2R)-3-phosphoglycerate + ATP = (2R)-3-phospho-glyceroyl phosphate + ADP. It functions in the pathway carbohydrate degradation; glycolysis; pyruvate from D-glyceraldehyde 3-phosphate: step 2/5. This chain is Phosphoglycerate kinase, found in Carboxydothermus hydrogenoformans (strain ATCC BAA-161 / DSM 6008 / Z-2901).